The sequence spans 459 residues: MHKEIAKELLLLAGGKNNIISISHCTTRLRFDVKDETKIDIHAIENLQGVQGTFFRYGLFQIIFGAGVVNKIYKEVVHVWETAPSEEPVHQKKASRKLNPAAAFAKTLSDIFVPIIPAITASGLLMGLIGMIKVFHWFAAGSPWIKMLDLVSSTAFILLPILVGFSAARQFGSNPYLGAVIAGLLTHPDLLDPSMLGSKTPSSLDIWGLHIPMMGYQGSMIPILLSVFVMSKIEKLLKSIVPKSLDVVIIPFITVMVTGCLALIVMNPAASIIGQIMTQSIVYIYDHAGIAAGALFGGIYSTIVLSGLHHSFYAIEATLLANPHVGVNFLVPIWSMANVAQGGAGLAVFLKTKQSSLKKIALPASLTAFLGIVEPIVFGVNLKLIRPFIGAAIGGAIGGAYVVAVQVVANSYGLTGIPMISIVLPFGAANFVHYMIGFLIAAVSAFIATLFLGFKEETE.

Residues 1 to 86 enclose the PTS EIIB type-1 domain; sequence MHKEIAKELL…VHVWETAPSE (86 aa). Cysteine 25 functions as the Phosphocysteine intermediate; for EIIB activity in the catalytic mechanism. In terms of domain architecture, PTS EIIC type-1 spans 106-459; that stretch reads KTLSDIFVPI…LFLGFKEETE (354 aa). The next 11 helical transmembrane spans lie at 111–131, 147–167, 177–197, 209–229, 245–265, 288–308, 329–349, 360–380, 388–408, 412–432, and 434–454; these read IFVP…LIGM, MLDL…GFSA, LGAV…SMLG, LHIP…SVFV, LDVV…ALIV, AGIA…LSGL, FLVP…LAVF, IALP…VFGV, FIGA…VQVV, YGLT…ANFV, and YMIG…FLGF.

It localises to the cell membrane. The phosphoenolpyruvate-dependent sugar phosphotransferase system (sugar PTS), a major carbohydrate active -transport system, catalyzes the phosphorylation of incoming sugar substrates concomitantly with their translocation across the cell membrane. This system may be involved in sucrose transport. The EIIB domain is mainly phosphorylated by the EIIA domains of GamP and PtsA/YpqE. Its function is as follows. Negatively regulates SacY activity by catalyzing its phosphorylation on 'His-99'. The sequence is that of Probable PTS system sucrose-specific EIIBC component (sacX) from Bacillus subtilis (strain 168).